The sequence spans 345 residues: Phosphoribosylformylglycinamidine cyclo-ligase (345 aa).

Belongs to the AIR synthase family.

It is found in the cytoplasm. It carries out the reaction 2-formamido-N(1)-(5-O-phospho-beta-D-ribosyl)acetamidine + ATP = 5-amino-1-(5-phospho-beta-D-ribosyl)imidazole + ADP + phosphate + H(+). Its pathway is purine metabolism; IMP biosynthesis via de novo pathway; 5-amino-1-(5-phospho-D-ribosyl)imidazole from N(2)-formyl-N(1)-(5-phospho-D-ribosyl)glycinamide: step 2/2. The polypeptide is Phosphoribosylformylglycinamidine cyclo-ligase (Prochlorococcus marinus (strain MIT 9211)).